A 175-amino-acid chain; its full sequence is Peptidyl-prolyl cis-trans isomerase B (175 aa).

The PPIase cyclophilin-type domain maps to 3-172; the sequence is EQLYATLKTN…EDVVIESVVV (170 aa).

The protein belongs to the cyclophilin-type PPIase family.

The protein resides in the cytoplasm. The catalysed reaction is [protein]-peptidylproline (omega=180) = [protein]-peptidylproline (omega=0). With respect to regulation, inhibited by cyclosporin A (CsA). Its function is as follows. PPIases accelerate the folding of proteins. It catalyzes the cis-trans isomerization of proline imidic peptide bonds in oligopeptides. This chain is Peptidyl-prolyl cis-trans isomerase B (cypB), found in Streptomyces anulatus (Streptomyces chrysomallus).